Reading from the N-terminus, the 400-residue chain is MSDNITPKTGKTNAIIEWIDYRLPVFSFLKHFSHYQTPKNLSYLWNLGSIAGIALVIQIITGVILAMHYTPHVDHAFDSVEKIMRNVNYGWLLRYTHAVGASMFFAAVYLHIARGLYYGSYKAPRELLWHIGIIIFLTMMATAFMGYVLPWGQMSYWGATVITNLFSAIPLIGKSIVTWLWGGFSVDNPTLNRFFSLHYLLPFIIVALVMLHLVALHQHGSNNPKGIDVKSPKDTIPFHPYYTVKDFVGFGVYFIIFAYFIFYEPNYLGHPDNYIPANPLVTPAHIVPEWYFLPFYAILRAVPSKLGGVLLMFGSIFVLFLLPWLDTSKVRSANYRPIYRIAFWIFMADCLLLGYLGGQPAEEPYITISRFAACYYFFHFLVALPLIGKYEKPLPLPEEL.

The chain crosses the membrane as a helical span at residues 47–67 (LGSIAGIALVIQIITGVILAM). Heme b contacts are provided by H97 and H111. Transmembrane regions (helical) follow at residues 98–118 (AVGA…GLYY), 131–151 (IGII…VLPW), 166–186 (FSAI…GFSV), 194–214 (FFSL…LHLV), 247–267 (FVGF…EPNY), 306–326 (LGGV…PWLD), 341–361 (IAFW…GQPA), and 368–388 (ISRF…PLIG). Heme b contacts are provided by H198 and H212.

This sequence belongs to the cytochrome b family. As to quaternary structure, the main subunits of complex b-c1 are: cytochrome b, cytochrome c1 and the Rieske protein. Heme b is required as a cofactor.

It is found in the cell membrane. Its function is as follows. Component of the ubiquinol-cytochrome c reductase complex (complex III or cytochrome b-c1 complex), which is a respiratory chain that generates an electrochemical potential coupled to ATP synthesis. This Rickettsia bellii (strain RML369-C) protein is Cytochrome b (petB).